The primary structure comprises 369 residues: Chaperone protein DnaJ (369 aa).

In terms of domain architecture, J spans 5–70 (DYYEVLGVGR…NKRAAYDQFG (66 aa)). The CR-type zinc-finger motif lies at 128–206 (GAETQIRIPR…CHGAGWVKRQ (79 aa)). Zn(2+)-binding residues include Cys141, Cys144, Cys158, Cys161, Cys180, Cys183, Cys194, and Cys197. 4 CXXCXGXG motif repeats span residues 141–148 (CDTCHGSG), 158–165 (CPTCNGHG), 180–187 (CSHCQGSG), and 194–201 (CGDCHGAG).

Belongs to the DnaJ family. Homodimer. It depends on Zn(2+) as a cofactor.

It localises to the cytoplasm. Functionally, participates actively in the response to hyperosmotic and heat shock by preventing the aggregation of stress-denatured proteins and by disaggregating proteins, also in an autonomous, DnaK-independent fashion. Unfolded proteins bind initially to DnaJ; upon interaction with the DnaJ-bound protein, DnaK hydrolyzes its bound ATP, resulting in the formation of a stable complex. GrpE releases ADP from DnaK; ATP binding to DnaK triggers the release of the substrate protein, thus completing the reaction cycle. Several rounds of ATP-dependent interactions between DnaJ, DnaK and GrpE are required for fully efficient folding. Also involved, together with DnaK and GrpE, in the DNA replication of plasmids through activation of initiation proteins. This is Chaperone protein DnaJ from Nitrosomonas europaea (strain ATCC 19718 / CIP 103999 / KCTC 2705 / NBRC 14298).